We begin with the raw amino-acid sequence, 88 residues long: RNA-binding protein Hfq (88 aa).

Residues 9-68 form the Sm domain; it reads DPFLNALRRERIPVSIYLVNGIKLQGQIESFDQFVILLKNTVNQMVYKHAISTVVPARAV. The segment at 66–88 is disordered; the sequence is RAVSHHSASDRPQGERPQEKTEE. The segment covering 72 to 88 has biased composition (basic and acidic residues); the sequence is SASDRPQGERPQEKTEE.

Belongs to the Hfq family. In terms of assembly, homohexamer.

RNA chaperone that binds small regulatory RNA (sRNAs) and mRNAs to facilitate mRNA translational regulation in response to envelope stress, environmental stress and changes in metabolite concentrations. Also binds with high specificity to tRNAs. The sequence is that of RNA-binding protein Hfq from Aliivibrio fischeri (strain ATCC 700601 / ES114) (Vibrio fischeri).